Reading from the N-terminus, the 328-residue chain is Ubiquitin carboxyl-terminal hydrolase isozyme L5 (328 aa).

The UCH catalytic domain occupies 7–225 (EWCLMESDPG…IRFNLMAIVS (219 aa)). Position 47 is an N6-succinyllysine (Lys47). Cys88 functions as the Nucleophile in the catalytic mechanism. Lys158 bears the N6-acetyllysine mark. Residue His164 is the Proton donor of the active site. Lys288 carries the N6-succinyllysine modification. One can recognise a ULD domain in the interval 290–318 (NYLPFIMELLKTLAEHQQLIPLVEKAKEK). The interaction with ADRM1 stretch occupies residues 312 to 328 (VEKAKEKQNAKKAQETK).

The protein belongs to the peptidase C12 family. In terms of assembly, component of the 19S (PA700) regulatory complex of the 26S proteasome. Interacts with ADRM1 and NFRKB. Component of the INO80 complex; specifically part of a complex module associated with N-terminus of INO80.

It localises to the cytoplasm. It is found in the nucleus. It carries out the reaction Thiol-dependent hydrolysis of ester, thioester, amide, peptide and isopeptide bonds formed by the C-terminal Gly of ubiquitin (a 76-residue protein attached to proteins as an intracellular targeting signal).. Activated by ADRM1. Inhibited by interaction with NFRKB. Its function is as follows. Protease that specifically cleaves 'Lys-48'-linked polyubiquitin chains. Deubiquitinating enzyme associated with the 19S regulatory subunit of the 26S proteasome. Putative regulatory component of the INO80 complex; however is inactive in the INO80 complex and is activated by a transient interaction of the INO80 complex with the proteasome via ADRM1. The polypeptide is Ubiquitin carboxyl-terminal hydrolase isozyme L5 (UCHL5) (Bos taurus (Bovine)).